Here is a 79-residue protein sequence, read N- to C-terminus: D-alanyl carrier protein (79 aa).

The 77-residue stretch at methionine 1–arginine 77 folds into the Carrier domain. Serine 35 is subject to O-(pantetheine 4'-phosphoryl)serine.

It belongs to the DltC family. In terms of processing, 4'-phosphopantetheine is transferred from CoA to a specific serine of apo-DCP.

It is found in the cytoplasm. Its pathway is cell wall biogenesis; lipoteichoic acid biosynthesis. Functionally, carrier protein involved in the D-alanylation of lipoteichoic acid (LTA). The loading of thioester-linked D-alanine onto DltC is catalyzed by D-alanine--D-alanyl carrier protein ligase DltA. The DltC-carried D-alanyl group is further transferred to cell membrane phosphatidylglycerol (PG) by forming an ester bond, probably catalyzed by DltD. D-alanylation of LTA plays an important role in modulating the properties of the cell wall in Gram-positive bacteria, influencing the net charge of the cell wall. This is D-alanyl carrier protein from Lactobacillus johnsonii (strain CNCM I-12250 / La1 / NCC 533).